The primary structure comprises 493 residues: Probable cytosol aminopeptidase (493 aa).

2 residues coordinate Mn(2+): lysine 262 and aspartate 267. The active site involves lysine 274. Residues aspartate 286, aspartate 345, and glutamate 347 each coordinate Mn(2+). Arginine 349 is an active-site residue.

Belongs to the peptidase M17 family. Requires Mn(2+) as cofactor.

Its subcellular location is the cytoplasm. The catalysed reaction is Release of an N-terminal amino acid, Xaa-|-Yaa-, in which Xaa is preferably Leu, but may be other amino acids including Pro although not Arg or Lys, and Yaa may be Pro. Amino acid amides and methyl esters are also readily hydrolyzed, but rates on arylamides are exceedingly low.. The enzyme catalyses Release of an N-terminal amino acid, preferentially leucine, but not glutamic or aspartic acids.. Functionally, presumably involved in the processing and regular turnover of intracellular proteins. Catalyzes the removal of unsubstituted N-terminal amino acids from various peptides. The chain is Probable cytosol aminopeptidase from Cyanothece sp. (strain PCC 7425 / ATCC 29141).